The primary structure comprises 134 residues: Large ribosomal subunit protein uL16c (134 aa).

It belongs to the universal ribosomal protein uL16 family. Part of the 50S ribosomal subunit.

It localises to the plastid. The protein localises to the chloroplast. This Gnetum parvifolium (Small-leaved jointfir) protein is Large ribosomal subunit protein uL16c.